Here is a 211-residue protein sequence, read N- to C-terminus: Thiamine-phosphate synthase (211 aa).

4-amino-2-methyl-5-(diphosphooxymethyl)pyrimidine is bound by residues 37–41 and Asn-69; that span reads QYRDK. The Mg(2+) site is built by Asp-70 and Asp-89. Ser-108 contributes to the 4-amino-2-methyl-5-(diphosphooxymethyl)pyrimidine binding site. Position 135-137 (135-137) interacts with 2-[(2R,5Z)-2-carboxy-4-methylthiazol-5(2H)-ylidene]ethyl phosphate; it reads SPT. Lys-138 contributes to the 4-amino-2-methyl-5-(diphosphooxymethyl)pyrimidine binding site. Residues Gly-165 and 185–186 contribute to the 2-[(2R,5Z)-2-carboxy-4-methylthiazol-5(2H)-ylidene]ethyl phosphate site; that span reads LS.

Belongs to the thiamine-phosphate synthase family. Mg(2+) serves as cofactor.

The catalysed reaction is 2-[(2R,5Z)-2-carboxy-4-methylthiazol-5(2H)-ylidene]ethyl phosphate + 4-amino-2-methyl-5-(diphosphooxymethyl)pyrimidine + 2 H(+) = thiamine phosphate + CO2 + diphosphate. It catalyses the reaction 2-(2-carboxy-4-methylthiazol-5-yl)ethyl phosphate + 4-amino-2-methyl-5-(diphosphooxymethyl)pyrimidine + 2 H(+) = thiamine phosphate + CO2 + diphosphate. It carries out the reaction 4-methyl-5-(2-phosphooxyethyl)-thiazole + 4-amino-2-methyl-5-(diphosphooxymethyl)pyrimidine + H(+) = thiamine phosphate + diphosphate. Its pathway is cofactor biosynthesis; thiamine diphosphate biosynthesis; thiamine phosphate from 4-amino-2-methyl-5-diphosphomethylpyrimidine and 4-methyl-5-(2-phosphoethyl)-thiazole: step 1/1. Functionally, condenses 4-methyl-5-(beta-hydroxyethyl)thiazole monophosphate (THZ-P) and 2-methyl-4-amino-5-hydroxymethyl pyrimidine pyrophosphate (HMP-PP) to form thiamine monophosphate (TMP). In Thiobacillus denitrificans (strain ATCC 25259 / T1), this protein is Thiamine-phosphate synthase.